Consider the following 321-residue polypeptide: Lipoyl synthase (321 aa).

Cys-68, Cys-73, Cys-79, Cys-94, Cys-98, Cys-101, and Ser-308 together coordinate [4Fe-4S] cluster. The Radical SAM core domain maps to 80 to 297; it reads FNHGTATFMI…KVLADELGFT (218 aa).

This sequence belongs to the radical SAM superfamily. Lipoyl synthase family. The cofactor is [4Fe-4S] cluster.

Its subcellular location is the cytoplasm. It carries out the reaction [[Fe-S] cluster scaffold protein carrying a second [4Fe-4S](2+) cluster] + N(6)-octanoyl-L-lysyl-[protein] + 2 oxidized [2Fe-2S]-[ferredoxin] + 2 S-adenosyl-L-methionine + 4 H(+) = [[Fe-S] cluster scaffold protein] + N(6)-[(R)-dihydrolipoyl]-L-lysyl-[protein] + 4 Fe(3+) + 2 hydrogen sulfide + 2 5'-deoxyadenosine + 2 L-methionine + 2 reduced [2Fe-2S]-[ferredoxin]. The protein operates within protein modification; protein lipoylation via endogenous pathway; protein N(6)-(lipoyl)lysine from octanoyl-[acyl-carrier-protein]: step 2/2. Catalyzes the radical-mediated insertion of two sulfur atoms into the C-6 and C-8 positions of the octanoyl moiety bound to the lipoyl domains of lipoate-dependent enzymes, thereby converting the octanoylated domains into lipoylated derivatives. The protein is Lipoyl synthase of Shewanella sp. (strain MR-7).